The primary structure comprises 721 residues: Phosphomethylpyrimidine synthase (721 aa).

Residues asparagine 256, methionine 285, tyrosine 314, histidine 350, 370–372, 411–414, and glutamate 450 contribute to the substrate site; these read SRG and DGMR. Histidine 454 contributes to the Zn(2+) binding site. Tyrosine 477 is a binding site for substrate. Histidine 518 is a Zn(2+) binding site. Residues cysteine 598, cysteine 601, and cysteine 606 each coordinate [4Fe-4S] cluster.

It belongs to the ThiC family. Homodimer. [4Fe-4S] cluster serves as cofactor.

The catalysed reaction is 5-amino-1-(5-phospho-beta-D-ribosyl)imidazole + S-adenosyl-L-methionine = 4-amino-2-methyl-5-(phosphooxymethyl)pyrimidine + CO + 5'-deoxyadenosine + formate + L-methionine + 3 H(+). The protein operates within cofactor biosynthesis; thiamine diphosphate biosynthesis. Functionally, catalyzes the synthesis of the hydroxymethylpyrimidine phosphate (HMP-P) moiety of thiamine from aminoimidazole ribotide (AIR) in a radical S-adenosyl-L-methionine (SAM)-dependent reaction. The chain is Phosphomethylpyrimidine synthase from Shewanella oneidensis (strain ATCC 700550 / JCM 31522 / CIP 106686 / LMG 19005 / NCIMB 14063 / MR-1).